Here is a 54-residue protein sequence, read N- to C-terminus: QSFKNAEPGIKLCGREFIRAVIYTCGGSRWEGSPGMSSKCCTYGCTRKDISILC.

Gln1 carries the pyrrolidone carboxylic acid modification. Disulfide bonds link Cys13/Cys41, Cys25/Cys54, and Cys40/Cys45.

The protein belongs to the insulin family. As to quaternary structure, heterodimer of a B chain and an A chain linked by two disulfide bonds.

It is found in the secreted. Its function is as follows. The function of relaxin in an oviparous species is not yet known. In Squalus acanthias (Spiny dogfish), this protein is Relaxin.